Consider the following 243-residue polypeptide: Small ribosomal subunit protein uS3 (243 aa).

A KH type-2 domain is found at 39 to 107 (MRKFVMSELK…ETHLNIVEVR (69 aa)). The interval 214–243 (ASERRAMEGDAQGPASRDRDRDRDRRRDNA) is disordered. The segment covering 229 to 243 (SRDRDRDRDRRRDNA) has biased composition (basic and acidic residues).

Belongs to the universal ribosomal protein uS3 family. As to quaternary structure, part of the 30S ribosomal subunit. Forms a tight complex with proteins S10 and S14.

Binds the lower part of the 30S subunit head. Binds mRNA in the 70S ribosome, positioning it for translation. The protein is Small ribosomal subunit protein uS3 of Rhizobium johnstonii (strain DSM 114642 / LMG 32736 / 3841) (Rhizobium leguminosarum bv. viciae).